We begin with the raw amino-acid sequence, 113 residues long: Protein ORF3 (113 aa).

Hydrophobic stretches follow at residues 1–21 and 32–52; these read MGSPCALGLFCCCSSCFCLCC and AVVGGATAVPAVVSGVTGLIL. The interval 27–67 is interaction with host HPX; it reads ASRLAAVVGGATAVPAVVSGVTGLILSPSPSPIFIQPTPSL. The interaction with the capsid protein stretch occupies residues 47–71; sequence VTGLILSPSPSPIFIQPTPSLPMSF. S70 is modified (phosphoserine; by host). The interval 71 to 113 is homodimerization, and interaction with host AMBP/bikunin; the sequence is FHNPGLELALDSRPAPLAPLGVTSPSAPPLPPVVDLPQLGLRR. A disordered region spans residues 89–113; sequence PLGVTSPSAPPLPPVVDLPQLGLRR. The segment at 94–103 is interaction with host SRC, HCK, FYN, PIK3R3 and GRB2; that stretch reads SPSAPPLPPV. A PTAP/PSAP motif motif is present at residues 95–98; the sequence is PSAP.

The protein belongs to the hepevirus ORF3 protein family. As to quaternary structure, forms homooligomers. Interacts with host SRC, HCK, FYN, PIK3R3 and GRB2 (via SH3 domain); binding does not activate the kinases. Interacts with host AMBP/bikunin and AMBP/alpha-1-microglobulin peptides. Interacts with host HPX/hemopexin. Interacts (when phosphorylated) with capsid protein ORF2. Interacts with host TSG101; this interaction plays a role in viral release from the host cell. Interacts with host SIRPA; this interaction down-regulates the phosphorylation of host IRF3. Palmitoylated in the N-terminus.

The protein localises to the host endoplasmic reticulum membrane. Its subcellular location is the host cytoplasm. It is found in the host cytoskeleton. The protein resides in the virion. It localises to the host cell membrane. In terms of biological role, small multifunctional phosphoprotein involved in virion morphogenesis, egress and counteracting host innate immunity. Plays critical roles in the final steps of viral release by interacting with host TSG101, a member of the vacuolar protein-sorting pathway and using other cellular host proteins involved in vesicle formation pathway. Also acts as a viroporin and forms ion conductive pores allowing viral particle release. Impairs the generation of type I interferon by down-regulating host TLR3 and TLR7 as well as their downstream signaling pathways. Down-regulates the phosphorylation of host IRF3 via the interaction with host SIRP-alpha, thereby inhibiting IFN-I expression. Interacts with host microtubules. The sequence is that of Protein ORF3 from Bandicota bengalensis (lesser bandicoot rat).